Consider the following 199-residue polypeptide: MNKSTNIVWQKTSVKKADRQHLNNHKSAVLWFTGLSGSGKSTLSSALEKELFSLETHTYHLDGDNVRHGLNKNLGFSPEDREENIRRIGEVSKLMVDAGLITLTAFISPYQEDRDHVRATLAQDEFIEIYVKCSLDMCEARDPKGLYKKARLGEINNFTGIDAPYEEPLHPEIVIDTENQSIEESVQTIIHYLKDKQYI.

Residue 34–41 (GLSGSGKS) coordinates ATP. Catalysis depends on S108, which acts as the Phosphoserine intermediate.

This sequence belongs to the APS kinase family.

The catalysed reaction is adenosine 5'-phosphosulfate + ATP = 3'-phosphoadenylyl sulfate + ADP + H(+). Its pathway is sulfur metabolism; hydrogen sulfide biosynthesis; sulfite from sulfate: step 2/3. Functionally, catalyzes the synthesis of activated sulfate. The chain is Adenylyl-sulfate kinase from Oceanobacillus iheyensis (strain DSM 14371 / CIP 107618 / JCM 11309 / KCTC 3954 / HTE831).